The chain runs to 215 residues: MSLPDSPLQLIGILFLLSILPLIIVMGTSFLKLAVVFSILRNALGIQQVPPNIALYGLALVLSLFIMGPTLLAVKERWHPVQVAGAPFWTSEWDSKALAPYRQFLQKNSEEKEANYFRNLIKRTWPEDIKRKIKPDSLLILIPAFTVSQLTQAFRIGLLIYLPFLAIDLLISNILLAMGMMMVSPMTISLPFKLLIFLLAGGWDLTLAQLVQSFS.

Helical transmembrane passes span 10-30 (LIGI…GTSF), 53-73 (IALY…TLLA), 156-176 (IGLL…NILL), and 188-208 (ISLP…LTLA).

It belongs to the FliP/MopC/SpaP family.

It is found in the cell membrane. The sequence is that of Virulence protein YscR (yscR) from Salmonella typhimurium (strain LT2 / SGSC1412 / ATCC 700720).